Consider the following 123-residue polypeptide: Large ribosomal subunit protein bL12 (123 aa).

The protein belongs to the bacterial ribosomal protein bL12 family. Homodimer. Part of the ribosomal stalk of the 50S ribosomal subunit. Forms a multimeric L10(L12)X complex, where L10 forms an elongated spine to which 2 to 4 L12 dimers bind in a sequential fashion. Binds GTP-bound translation factors.

Forms part of the ribosomal stalk which helps the ribosome interact with GTP-bound translation factors. Is thus essential for accurate translation. This is Large ribosomal subunit protein bL12 from Aliarcobacter butzleri (strain RM4018) (Arcobacter butzleri).